The following is a 317-amino-acid chain: 17-beta-hydroxysteroid dehydrogenase type 6 (317 aa).

The first 17 residues, 1–17 (MWLYLAAFVGLYYLLHW), serve as a signal peptide directing secretion. Residue 33 to 57 (FITGCDSGFGNLLARQLDARGLRVL) participates in NAD(+) binding. Asn161 carries an N-linked (GlcNAc...) asparagine glycan. Ser164 is a binding site for substrate. Catalysis depends on Tyr176, which acts as the Proton acceptor. Residues Asn215 and Asn256 are each glycosylated (N-linked (GlcNAc...) asparagine).

The protein belongs to the short-chain dehydrogenases/reductases (SDR) family. As to expression, detected in liver and prostate (at protein level). Detected in adult liver, lung, brain, placenta, prostate, adrenal gland, testis, mammary gland, spleen, spinal cord and uterus. Detected in caudate nucleus, and at lower levels in amygdala, corpus callosum, hippocampus, substantia nigra and thalamus. Detected in fetal lung, liver and brain.

The protein resides in the microsome membrane. The protein localises to the early endosome membrane. The catalysed reaction is all-trans-retinol--[retinol-binding protein] + NAD(+) = all-trans-retinal--[retinol-binding protein] + NADH + H(+). It catalyses the reaction all-trans-retinol + NAD(+) = all-trans-retinal + NADH + H(+). It carries out the reaction androsterone + NAD(+) = 5alpha-androstan-3,17-dione + NADH + H(+). The enzyme catalyses testosterone + NAD(+) = androst-4-ene-3,17-dione + NADH + H(+). The catalysed reaction is 5alpha-androstane-3alpha,17beta-diol + NAD(+) = 17beta-hydroxy-5alpha-androstan-3-one + NADH + H(+). It catalyses the reaction 17beta-estradiol + NAD(+) = estrone + NADH + H(+). It carries out the reaction 17beta-estradiol + NADP(+) = estrone + NADPH + H(+). The enzyme catalyses 3alpha-hydroxy-5alpha-pregnan-20-one + NAD(+) = 5alpha-pregnane-3,20-dione + NADH + H(+). The catalysed reaction is 5alpha-androstane-3beta,17beta-diol + NAD(+) = 17beta-hydroxy-5alpha-androstan-3-one + NADH + H(+). It catalyses the reaction 3beta-hydroxy-5alpha-androstan-17-one + NAD(+) = 5alpha-androstan-3,17-dione + NADH + H(+). In terms of biological role, NAD-dependent oxidoreductase with broad substrate specificity that shows both oxidative and reductive activity (in vitro). Has 17-beta-hydroxysteroid dehydrogenase activity towards various steroids (in vitro). Converts 5-alpha-androstan-3-alpha,17-beta-diol to androsterone and estradiol to estrone (in vitro). Has 3-alpha-hydroxysteroid dehydrogenase activity towards androsterone (in vitro). Has retinol dehydrogenase activity towards all-trans-retinol (in vitro). Can convert androsterone to epi-androsterone. Androsterone is first oxidized to 5-alpha-androstane-3,17-dione and then reduced to epi-andosterone. Can act on both C-19 and C-21 3-alpha-hydroxysteroids. This is 17-beta-hydroxysteroid dehydrogenase type 6 (HSD17B6) from Homo sapiens (Human).